We begin with the raw amino-acid sequence, 386 residues long: Cytochrome b (386 aa).

4 helical membrane-spanning segments follow: residues 32-52 (FGSL…TLAM), 76-98 (WLIR…LHVG), 113-133 (TWII…LGYV), and 179-199 (FFAL…MHLI). H82 and H96 together coordinate heme b. Residues H183 and H197 each contribute to the heme b site. Residue H202 coordinates a ubiquinone. 4 consecutive transmembrane segments (helical) span residues 226–246 (YIFK…LFVF), 290–310 (LLGV…PITD), 322–342 (LSKV…QLGA), and 349–369 (FIEF…VIMP).

This sequence belongs to the cytochrome b family. In terms of assembly, fungal cytochrome b-c1 complex contains 10 subunits; 3 respiratory subunits, 2 core proteins and 5 low-molecular weight proteins. Cytochrome b-c1 complex is a homodimer. The cofactor is heme b.

Its subcellular location is the mitochondrion inner membrane. Its function is as follows. Component of the ubiquinol-cytochrome c reductase complex (complex III or cytochrome b-c1 complex) that is part of the mitochondrial respiratory chain. The b-c1 complex mediates electron transfer from ubiquinol to cytochrome c. Contributes to the generation of a proton gradient across the mitochondrial membrane that is then used for ATP synthesis. This Talaromyces marneffei (Penicillium marneffei) protein is Cytochrome b (cob).